We begin with the raw amino-acid sequence, 1242 residues long: DNA excision repair protein ERCC-6-like (1242 aa).

Residue Ser14 is modified to Phosphoserine. A TPR 1 repeat occupies 21-54 (YLRYVKEAKEATKNGDLEQALKLFNLAKDIFPNE). The region spanning 109-277 (SLYRDGRRGG…WSLFDFACQG (169 aa)) is the Helicase ATP-binding domain. 122-129 (DDMGLGKT) lines the ATP pocket. Positions 228–231 (DEAH) match the DEAH box motif. The region spanning 466–626 (FLMDLLKKLR…PFRYFSKQEL (161 aa)) is the Helicase C-terminal domain. Residues Ser755 and Ser773 each carry the phosphoserine modification. Thr815 carries the post-translational modification Phosphothreonine. Phosphoserine occurs at positions 963, 989, 998, and 1021. A Phosphothreonine modification is found at Thr1055. 3 positions are modified to phosphoserine: Ser1061, Ser1090, and Ser1110. Positions 1103–1181 (EERLDNSSEA…LSDGQLVDSP (79 aa)) are disordered. Basic and acidic residues-rich tracts occupy residues 1105–1121 (RLDN…HLEE) and 1130–1140 (APEHTKEDPSR). Polar residues predominate over residues 1141–1156 (ETLSSENKSSQLSTSK). A phosphoserine mark is found at Ser1173 and Ser1180. A TPR 2 repeat occupies 1192–1225 (YDTLVLHGKELKECGKIQEALDCLVKALDIKSSD).

It belongs to the SNF2/RAD54 helicase family. In terms of assembly, interacts with PLK1, which phosphorylates it. Both proteins are mutually dependent on each other for correct subcellular localization. Interacts (via N-terminal TPR repeat) with BEND3 (via BEN domains 1 and 3); the interaction is direct. Phosphorylation by PLK1 prevents the association with chromosome arms and restricts its localization to the kinetochore-centromere region.

The protein resides in the chromosome. The protein localises to the centromere. Its subcellular location is the kinetochore. The catalysed reaction is ATP + H2O = ADP + phosphate + H(+). Its function is as follows. DNA helicase that acts as a tension sensor that associates with catenated DNA which is stretched under tension until it is resolved during anaphase. Functions as ATP-dependent DNA translocase. Can promote Holliday junction branch migration (in vitro). This Bos taurus (Bovine) protein is DNA excision repair protein ERCC-6-like (ERCC6L).